The chain runs to 108 residues: Iron-sulfur cluster assembly protein CyaY (108 aa).

Belongs to the frataxin family.

Its function is as follows. Involved in iron-sulfur (Fe-S) cluster assembly. May act as a regulator of Fe-S biogenesis. The polypeptide is Iron-sulfur cluster assembly protein CyaY (Burkholderia mallei (strain NCTC 10247)).